The sequence spans 483 residues: Ankyrin repeat domain-containing protein M-T5 (483 aa).

6 ANK repeats span residues 32–63, 67–101, 105–137, 177–210, 250–279, and 283–312; these read SRDT…DVNG, SRTS…DVNA, DGRY…SVYV, YGFN…DSSR, LDFT…DPNV, and LGNS…TPDA. Residues 390–478 form a PRANC/F-box-like region; it reads VSVFDTAFGL…LTDDEIHDLF (89 aa).

As to quaternary structure, interacts (via PRANC/F-box-like domain) with the SKP1 component of the host SCF ubiquitin ligase complex. Interacts (via N-terminus) with host AKT1.

Its function is as follows. Substrate-specific adapter of SKP1-containing E3 ubiquitin-protein ligases which mediate the ubiquitination and subsequent proteasomal degradation of host target proteins including CDKN1B. Disappearance of host CDKN1B correlates with cell cycle progression through the G0/G1 checkpoint. Therefore, viruses in infected cells are protected from diverse innate host antiviral responses normally triggered by G0/G1 cell cycle arrest. The chain is Ankyrin repeat domain-containing protein M-T5 (m005R) from Myxoma virus (strain Lausanne) (MYXV).